The primary structure comprises 268 residues: Undecaprenyl-diphosphatase (268 aa).

7 helical membrane passes run 47-67 (FTIL…FAKL), 83-103 (FVIG…LAGG), 109-129 (LFNP…LLWV), 144-164 (FPLP…IPGV), 184-204 (AAEF…VYDL), 217-237 (LIVA…VKSF), and 246-266 (FTLF…ALAL).

The protein belongs to the UppP family.

The protein resides in the cell inner membrane. It carries out the reaction di-trans,octa-cis-undecaprenyl diphosphate + H2O = di-trans,octa-cis-undecaprenyl phosphate + phosphate + H(+). Catalyzes the dephosphorylation of undecaprenyl diphosphate (UPP). Confers resistance to bacitracin. This chain is Undecaprenyl-diphosphatase, found in Rhodopseudomonas palustris (strain BisB18).